Reading from the N-terminus, the 62-residue chain is Rhodotorucin-A peptides type 1 (62 aa).

Positions 1-3 (MVA) are excised as a propeptide. Cysteine 14 carries S-farnesyl cysteine lipidation. Residues 15-18 (TVSK) constitute a propeptide that is removed on maturation. A lipid anchor (S-farnesyl cysteine) is attached at cysteine 29. The propeptide occupies 30–33 (TVSK). The S-farnesyl cysteine moiety is linked to residue cysteine 44. Residues 45–48 (TVSK) constitute a propeptide that is removed on maturation. Residue cysteine 59 is the site of S-farnesyl cysteine attachment. A propeptide spanning residues 60–62 (TVA) is cleaved from the precursor.

It localises to the cell membrane. Rhodotorucin-A is a mating pheromone in cells of mating type A of Rhodosporidium toruloides. The chain is Rhodotorucin-A peptides type 1 (RHA1) from Rhodotorula toruloides (Yeast).